Here is a 189-residue protein sequence, read N- to C-terminus: Adenylate kinase (189 aa).

12–17 (GSGKTT) is a binding site for ATP. The interval 33–62 (STGDLLRAEVASGSELGKLIDGFISKGNLV) is NMP. AMP-binding positions include Thr34, Arg39, 60–62 (NLV), 87–90 (GYPR), and Gln94. Residues 129 to 135 (GRARGAD) are LID. An ATP-binding site is contributed by Arg130. AMP is bound by residues Arg132 and Arg144. Arg172 contributes to the ATP binding site.

The protein belongs to the adenylate kinase family. In terms of assembly, monomer.

It is found in the cytoplasm. The catalysed reaction is AMP + ATP = 2 ADP. Its pathway is purine metabolism; AMP biosynthesis via salvage pathway; AMP from ADP: step 1/1. In terms of biological role, catalyzes the reversible transfer of the terminal phosphate group between ATP and AMP. Plays an important role in cellular energy homeostasis and in adenine nucleotide metabolism. This chain is Adenylate kinase, found in Campylobacter concisus (strain 13826).